Consider the following 483-residue polypeptide: Linamarin synthase 1 (483 aa).

H22 acts as the Proton acceptor in catalysis. H22 contacts an anthocyanidin. The Charge relay role is filled by D124. UDP-alpha-D-glucose is bound by residues T146, V360, Q362, H377, W380, N381, S382, and E385. A400 serves as a coordination point for an anthocyanidin. 2 residues coordinate UDP-alpha-D-glucose: E401 and Q402.

The protein belongs to the UDP-glycosyltransferase family. In terms of tissue distribution, expressed in the cortex, xylem and phloem parenchyma, and in specific cells in the endodermis of the petiole of the first unfolded leaf.

It catalyses the reaction 2-hydroxy-2-methylpropanenitrile + UDP-alpha-D-glucose = linamarin + UDP + H(+). Its function is as follows. UDP-glucosyltransferase catalyzing in planta synthesis of cyanogenic glucosides. Able to glucosylate acetone cyanohydrin and 2-hydroxy-2-methylbutyronitrile, forming linamarin and lotaustralin. Also accepts, to some extent, a wide range of potential acceptor substrates, including simple alcohols, flavonoids, isoflavonoids and other hydroxynitriles such as p-hydroxymandelonitrile, mandelonitrile, (E)-4-hydroxy-2-methylbut-2-enenitrile and (E)- 2-(hydroxymethyl)but-2-enenitrile. The chain is Linamarin synthase 1 from Manihot esculenta (Cassava).